The primary structure comprises 448 residues: Phosphoglucosamine mutase (448 aa).

Serine 100 serves as the catalytic Phosphoserine intermediate. The Mg(2+) site is built by serine 100, aspartate 240, aspartate 242, and aspartate 244. Phosphoserine is present on serine 100.

Belongs to the phosphohexose mutase family. As to quaternary structure, homodimer, may form a complex with CdaA. Mg(2+) is required as a cofactor. Post-translationally, activated by phosphorylation.

It carries out the reaction alpha-D-glucosamine 1-phosphate = D-glucosamine 6-phosphate. Catalyzes the conversion of glucosamine-6-phosphate to glucosamine-1-phosphate. Glucosamine-1-phosphate is used for cell wall biosynthesis. The chain is Phosphoglucosamine mutase from Bacillus subtilis (strain 168).